A 267-amino-acid chain; its full sequence is Small ribosomal subunit protein uS2 (267 aa).

The interval Met1–Glu72 is disordered. The segment covering Asp10 to Glu72 has biased composition (acidic residues).

Belongs to the universal ribosomal protein uS2 family. Post-translationally, the N-terminus is blocked.

The sequence is that of Small ribosomal subunit protein uS2 (rps2) from Haloarcula marismortui (strain ATCC 43049 / DSM 3752 / JCM 8966 / VKM B-1809) (Halobacterium marismortui).